Reading from the N-terminus, the 517-residue chain is MSPDSRDPEAQRDVGLTKNTSSVNIPLESVKTDKTSNASPIMGPGEGPKIDDTLVSWSGPDDSQNPQNMPQWKKWVITWLLSFLNVWVTFSSTIFASAVRTTSLEYGVSRVVMTLGVSLTVLGFAVGPLIWGPMSEVIGRLTPFYFGYAVFCIFQIPVGVAQNVYTILICRFFIGFFGTSAMAVTPGVLADIFSPKDRGVAVSVYAAAAFIGPIFGPIVGGFVVDSSLGWRWTAWITLILASAFGLAALVFVPETYGPIILQRRAARLRQETRNFAYHSALDENPPTLNDIIFKYFLRPFQMLIKEPILLLVTLYISLVYGVLYLFFVAYPIEFLEVRRWTHAGVAALPLLAVMLGTLAGCLTILFVTGHTYPRKMAKMGRVPPEERLKLMMVGSVSLPIGLFWFGWTSSRSVHWFAQTAAGFPIGIGLALIWVQGLSFLIDVYLMFANSALAGNTLIRSAVGAAFPLFGAPMYHKLGVNWASSLLGFLSVAMIPIPVAFYYYGPKIRAMSKFSPKL.

Residues 1–12 show a composition bias toward basic and acidic residues; the sequence is MSPDSRDPEAQR. Positions 1–45 are disordered; that stretch reads MSPDSRDPEAQRDVGLTKNTSSVNIPLESVKTDKTSNASPIMGPG. N-linked (GlcNAc...) asparagine glycosylation is present at N19. The next 12 membrane-spanning stretches (helical) occupy residues 75 to 95, 111 to 131, 141 to 161, 172 to 192, 204 to 224, 232 to 252, 308 to 328, 347 to 367, 390 to 410, 421 to 441, 457 to 475, and 485 to 505; these read WVIT…STIF, VVMT…PLIW, LTPF…VGVA, FFIG…LADI, VYAA…GFVV, WTAW…LVFV, ILLL…LFFV, ALPL…ILFV, LMMV…WTSS, AGFP…SFLI, LIRS…PMYH, and LLGF…YYGP.

Belongs to the major facilitator superfamily. CAR1 family.

The protein localises to the membrane. Functionally, MFS transporter; part of the gene cluster that mediates the biosynthesis the mycotoxin ascochitine, an o-quinone methide that plays a possible protective role against other microbial competitors in nature and is considered to be important for pathogenicity of legume-associated Didymella species. The sequence is that of Ascochitine biosynthesis cluster MFS transporter from Didymella fabae (Leaf and pod spot disease fungus).